The sequence spans 453 residues: Probable exopolygalacturonase B (453 aa).

The first 16 residues, 1–16, serve as a signal peptide directing secretion; it reads MKFLALAALFASTVSS. 2 N-linked (GlcNAc...) asparagine glycosylation sites follow: asparagine 185 and asparagine 225. Residue aspartate 255 is the Proton donor of the active site. Cysteine 257 and cysteine 274 are joined by a disulfide. N-linked (GlcNAc...) asparagine glycans are attached at residues asparagine 263 and asparagine 275. The active site involves histidine 278. 2 PbH1 repeats span residues 295–316 and 327–348; these read IENVWIENVTLLNGENGARLKA and INNVTYKNIHVENTDNPIVLDQ. N-linked (GlcNAc...) asparagine glycosylation is found at asparagine 302, asparagine 329, asparagine 354, and asparagine 366. Residues 362–405 form a PbH1 3 repeat; the sequence is PSRVNFTNIVFENIYGTSSGKHGKVVADLTCSPNAVCSGIRLKN. Cysteine 392 and cysteine 398 are oxidised to a cystine. N-linked (GlcNAc...) asparagine glycosylation occurs at asparagine 436.

Belongs to the glycosyl hydrolase 28 family.

Its subcellular location is the secreted. The enzyme catalyses [(1-&gt;4)-alpha-D-galacturonosyl](n) + H2O = alpha-D-galacturonate + [(1-&gt;4)-alpha-D-galacturonosyl](n-1). In terms of biological role, specific in hydrolyzing the terminal glycosidic bond of polygalacturonic acid and oligogalacturonates. In Neosartorya fischeri (strain ATCC 1020 / DSM 3700 / CBS 544.65 / FGSC A1164 / JCM 1740 / NRRL 181 / WB 181) (Aspergillus fischerianus), this protein is Probable exopolygalacturonase B (pgxB).